A 249-amino-acid chain; its full sequence is Type III pantothenate kinase (249 aa).

6–13 (DCGNSFIK) serves as a coordination point for ATP. Substrate is bound by residues Tyr93 and 100–103 (GLDR). Asp102 (proton acceptor) is an active-site residue. Residue Asp122 coordinates K(+). Thr125 contacts ATP. Thr181 provides a ligand contact to substrate.

Belongs to the type III pantothenate kinase family. In terms of assembly, homodimer. It depends on NH4(+) as a cofactor. Requires K(+) as cofactor.

The protein localises to the cytoplasm. It catalyses the reaction (R)-pantothenate + ATP = (R)-4'-phosphopantothenate + ADP + H(+). It participates in cofactor biosynthesis; coenzyme A biosynthesis; CoA from (R)-pantothenate: step 1/5. In terms of biological role, catalyzes the phosphorylation of pantothenate (Pan), the first step in CoA biosynthesis. The chain is Type III pantothenate kinase from Pseudomonas savastanoi pv. phaseolicola (strain 1448A / Race 6) (Pseudomonas syringae pv. phaseolicola (strain 1448A / Race 6)).